Here is a 143-residue protein sequence, read N- to C-terminus: Interleukin-4 (143 aa).

The signal sequence occupies residues 1–19 (MGLSPQLAAVLLCLLVCTG). 2 disulfides stabilise this stretch: Cys48–Cys88 and Cys70–Cys115. Residues Asn62 and Asn91 are each glycosylated (N-linked (GlcNAc...) asparagine).

Belongs to the IL-4/IL-13 family.

It is found in the secreted. In terms of biological role, participates in at least several B-cell activation processes as well as of other cell types. It is a costimulator of DNA-synthesis. It induces the expression of class II MHC molecules on resting B-cells. It enhances both secretion and cell surface expression of IgE and IgG1. It also regulates the expression of the low affinity Fc receptor for IgE (CD23) on both lymphocytes and monocytes. Positively regulates IL31RA expression in macrophages. Stimulates autophagy in dendritic cells by interfering with mTORC1 signaling and through the induction of RUFY4. This is Interleukin-4 (IL4) from Meriones unguiculatus (Mongolian jird).